A 108-amino-acid chain; its full sequence is Phosphoribosyl-ATP pyrophosphatase (108 aa).

The interval 88–108 (VENELDRREGRSGIEEKASRK) is disordered. Basic and acidic residues predominate over residues 91 to 108 (ELDRREGRSGIEEKASRK).

The protein belongs to the PRA-PH family.

It is found in the cytoplasm. It carries out the reaction 1-(5-phospho-beta-D-ribosyl)-ATP + H2O = 1-(5-phospho-beta-D-ribosyl)-5'-AMP + diphosphate + H(+). It participates in amino-acid biosynthesis; L-histidine biosynthesis; L-histidine from 5-phospho-alpha-D-ribose 1-diphosphate: step 2/9. The chain is Phosphoribosyl-ATP pyrophosphatase from Paracoccus denitrificans (strain Pd 1222).